The chain runs to 495 residues: PXA domain protein 1 (495 aa).

Positions 1 to 174 constitute a PXA domain; the sequence is MAKLSSLLNP…KFIIYLSKAI (174 aa). The next 2 helical transmembrane spans lie at 7 to 27 and 235 to 255; these read LLNP…YSGI and WFFF…FVAE. Polar residues-rich tracts occupy residues 402 to 419 and 427 to 436; these read AVSS…QRSF and DSQTPSENSA. Positions 402–436 are disordered; sequence AVSSPTKANTNKSHQRSFSIPKATKDSQTPSENSA. A helical transmembrane segment spans residues 446-466; it reads AYSQIPVIPFFLPSDKLIMLV.

Its subcellular location is the endosome membrane. Its function is as follows. Required for required for normal vacuolar morphology and for vacuolar protein transport. Also required for endosome-to-Golgi protein transport. This Schizosaccharomyces pombe (strain 972 / ATCC 24843) (Fission yeast) protein is PXA domain protein 1 (pxa1).